Consider the following 215-residue polypeptide: Redox-sensing transcriptional repressor Rex (215 aa).

A DNA-binding region (H-T-H motif) is located at residues 18 to 57 (LYYRFLKNLHASGKQRVSSAELSDAVKVDSATIRRDFSYF). 92 to 97 (GVGNLG) is an NAD(+) binding site.

It belongs to the transcriptional regulatory Rex family. As to quaternary structure, homodimer.

It is found in the cytoplasm. In terms of biological role, modulates transcription in response to changes in cellular NADH/NAD(+) redox state. The sequence is that of Redox-sensing transcriptional repressor Rex from Bacillus subtilis (strain 168).